Here is a 318-residue protein sequence, read N- to C-terminus: Ferredoxin--NADP reductase (318 aa).

Aspartate 33, glutamine 41, tyrosine 46, valine 84, phenylalanine 115, aspartate 276, and threonine 316 together coordinate FAD.

It belongs to the ferredoxin--NADP reductase type 2 family. Homodimer. Requires FAD as cofactor.

The enzyme catalyses 2 reduced [2Fe-2S]-[ferredoxin] + NADP(+) + H(+) = 2 oxidized [2Fe-2S]-[ferredoxin] + NADPH. The polypeptide is Ferredoxin--NADP reductase (Lactobacillus johnsonii (strain CNCM I-12250 / La1 / NCC 533)).